A 495-amino-acid polypeptide reads, in one-letter code: Glutamate--tRNA ligase (495 aa).

The 'HIGH' region motif lies at 12–22 (PSPTGHLHIGN). Residues 259-263 (KLSKR) carry the 'KMSKS' region motif. Lys-262 lines the ATP pocket.

This sequence belongs to the class-I aminoacyl-tRNA synthetase family. Glutamate--tRNA ligase type 1 subfamily. As to quaternary structure, monomer.

The protein resides in the cytoplasm. It catalyses the reaction tRNA(Glu) + L-glutamate + ATP = L-glutamyl-tRNA(Glu) + AMP + diphosphate. Its function is as follows. Catalyzes the attachment of glutamate to tRNA(Glu) in a two-step reaction: glutamate is first activated by ATP to form Glu-AMP and then transferred to the acceptor end of tRNA(Glu). The chain is Glutamate--tRNA ligase from Latilactobacillus sakei subsp. sakei (strain 23K) (Lactobacillus sakei subsp. sakei).